A 434-amino-acid chain; its full sequence is Ribulose bisphosphate carboxylase-like protein (434 aa).

Mg(2+)-binding residues include Lys198, Asp200, and Glu201. Lys198 is subject to N6-carboxylysine.

It belongs to the RuBisCO large chain family. Type IV subfamily. As to quaternary structure, homodimer. Requires Mg(2+) as cofactor.

May be involved in sulfur metabolism and oxidative stress response. Does not show RuBisCO activity. This is Ribulose bisphosphate carboxylase-like protein from Chlorobaculum thiosulfatiphilum (Chlorobium limicola f.sp. thiosulfatophilum).